A 376-amino-acid polypeptide reads, in one-letter code: TATA box-binding protein-like 2 (376 aa).

The segment at 103-184 is disordered; the sequence is PDEVTQENKD…SDSLSLASIT (82 aa). Residues 108 to 122 show a composition bias toward basic and acidic residues; it reads QENKDQPVISKHETE. Low complexity predominate over residues 126 to 159; the sequence is ESQSPQSRLPSPSEQDVGLGLNSSSLSNSHSQLH. The segment covering 175–184 has biased composition (polar residues); that stretch reads SDSLSLASIT.

It belongs to the TBP family. In terms of assembly, interacts with TAF3.

The protein resides in the cytoplasm. The protein localises to the nucleus. In terms of biological role, transcription factor required in complex with TAF3 for the differentiation of myoblasts into myocytes. The complex replaces TFIID at specific promoters at an early stage in the differentiation process. This Pan troglodytes (Chimpanzee) protein is TATA box-binding protein-like 2.